The following is a 209-amino-acid chain: High frequency lysogenization protein HflD homolog (209 aa).

This sequence belongs to the HflD family.

The protein resides in the cytoplasm. Its subcellular location is the cell inner membrane. The protein is High frequency lysogenization protein HflD homolog of Marinomonas sp. (strain MWYL1).